The sequence spans 255 residues: 3-dehydroquinate dehydratase (255 aa).

Residues 47-49 and R83 contribute to the 3-dehydroquinate site; that span reads EWR. The Proton donor/acceptor role is filled by H144. K171 functions as the Schiff-base intermediate with substrate in the catalytic mechanism. 3-dehydroquinate-binding residues include R214, S233, and Q237.

The protein belongs to the type-I 3-dehydroquinase family. In terms of assembly, homodimer or homotetramer.

It carries out the reaction 3-dehydroquinate = 3-dehydroshikimate + H2O. The protein operates within metabolic intermediate biosynthesis; chorismate biosynthesis; chorismate from D-erythrose 4-phosphate and phosphoenolpyruvate: step 3/7. Involved in the third step of the chorismate pathway, which leads to the biosynthesis of aromatic amino acids. Catalyzes the cis-dehydration of 3-dehydroquinate (DHQ) and introduces the first double bond of the aromatic ring to yield 3-dehydroshikimate. The reaction involves the formation of an imine intermediate between the keto group of 3-dehydroquinate and the epsilon-amino group of Lys-170 at the active site. The polypeptide is 3-dehydroquinate dehydratase (Clostridioides difficile (strain 630) (Peptoclostridium difficile)).